The chain runs to 429 residues: Esterase/beta-lactamase LipL (429 aa).

Catalysis depends on serine 88, which acts as the Acyl-ester intermediate.

The protein belongs to the beta-lactamase family.

It is found in the secreted. It localises to the cell wall. The protein resides in the cell membrane. The enzyme catalyses a fatty acid ester + H2O = an aliphatic alcohol + a fatty acid + H(+). It catalyses the reaction an acetyl ester + H2O = an aliphatic alcohol + acetate + H(+). The catalysed reaction is a butanoate ester + H2O = an aliphatic alcohol + butanoate + H(+). It carries out the reaction an octanoate ester + H2O = an aliphatic alcohol + octanoate + H(+). The enzyme catalyses decanoate ester + H2O = decanoate + an aliphatic alcohol + H(+). It catalyses the reaction a dodecanoate ester + H2O = an aliphatic alcohol + dodecanoate + H(+). The catalysed reaction is a tetradecanoate ester + H2O = an aliphatic alcohol + tetradecanoate + H(+). It carries out the reaction hexadecanoate ester + H2O = an aliphatic alcohol + hexadecanoate + H(+). The enzyme catalyses octadecanoate ester + H2O = an aliphatic alcohol + octadecanoate + H(+). It catalyses the reaction a hexanoate ester + H2O = an aliphatic alcohol + hexanoate + H(+). The catalysed reaction is a beta-lactam + H2O = a substituted beta-amino acid. With respect to regulation, esterase and beta-lactamase activities are inhibited by the active site residue modifiers phenylmethanesulfonylflouride (PMSF) and diethylpyrocarbonate (DEPC). Its function is as follows. Shows both esterase and beta-lactamase activities, with a much higher activity against phenyl esters than against beta-lactams. Shows esterase activity against both long-chain and short-chain p-nitrophenol (pNP) esters, with a preference for shorter chain esters. Hydrolyzes substrates containing beta-lactam ring such as nitrocefin and ampicillin. Functions as an immunogen that activates both humoral and cell-mediated responses. The chain is Esterase/beta-lactamase LipL from Mycobacterium tuberculosis (strain ATCC 25618 / H37Rv).